We begin with the raw amino-acid sequence, 81 residues long: Small hydrophobic protein (81 aa).

The Intravirion segment spans residues 1 to 19 (MNSTSTIIEFTGEFWTYFT). A helical; Signal-anchor for type II membrane protein membrane pass occupies residues 20-40 (LVFMMLTIGFFFIVTSLVAAI). Residues 41-81 (LNKLCDLNDHHTNSLDIRTKLRSDTQLITRAHEESINQSSN) lie on the Virion surface side of the membrane. Asn-77 carries an N-linked (GlcNAc...) asparagine; by host glycan.

The protein belongs to the orthopneumovirus small hydrophobic protein family. In terms of assembly, homopentamer forming a funnel-like pore. Interacts with glycoprotein G; this interaction occurs on the surface of virion particles and infected cells. Interacts with host BCAP31 (via C-terminus); this interaction is direct. Four species of SH have been detected in infected cell cytoplasm: a 7.5 kDa non-glycosylated form (SH0), a 13-15 kDa form that contains one or two N-linked carbohydrate side chains of the high-mannose type (SHg), a 21-30 kDa polylactosaminoglycan-modified form of the protein (SHp), and the isoform generated by alternative translational initiation. Of these different forms, SH0 is by far the most abundant protein detected during virus infection. In terms of processing, tyrosine phosphorylated.

The protein resides in the virion membrane. Its subcellular location is the host cell membrane. It localises to the host Golgi apparatus membrane. It is found in the host endoplasmic reticulum membrane. With respect to regulation, channel activity is inhibited by copper. Also inhibited by small-molecule pyronin B. Functionally, viroporin that forms a homopentameric ion channel displaying low ion selectivity. May play a role in virus morphogenesis and pathogenicity at various stages of the viral life cycle. Accumulates at the membrane of the Golgi apparatus in infected cells and may facilitate virus release by modifying the secretory pathway. May enhance host membrane permeability and disrupt cellular ion homeostasis, which can be sensed as damage-associated molecular patterns/danger signals, triggering NLRP3 inflammasome activation and inflammatory immune response. Also inhibits host TNFA-mediated signaling pathway and may delay apoptosis, allowing time for the virus to replicate. This is Small hydrophobic protein (SH) from Bos taurus (Bovine).